The following is a 152-amino-acid chain: SsrA-binding protein (152 aa).

The protein belongs to the SmpB family.

The protein resides in the cytoplasm. Required for rescue of stalled ribosomes mediated by trans-translation. Binds to transfer-messenger RNA (tmRNA), required for stable association of tmRNA with ribosomes. tmRNA and SmpB together mimic tRNA shape, replacing the anticodon stem-loop with SmpB. tmRNA is encoded by the ssrA gene; the 2 termini fold to resemble tRNA(Ala) and it encodes a 'tag peptide', a short internal open reading frame. During trans-translation Ala-aminoacylated tmRNA acts like a tRNA, entering the A-site of stalled ribosomes, displacing the stalled mRNA. The ribosome then switches to translate the ORF on the tmRNA; the nascent peptide is terminated with the 'tag peptide' encoded by the tmRNA and targeted for degradation. The ribosome is freed to recommence translation, which seems to be the essential function of trans-translation. The protein is SsrA-binding protein of Rickettsia prowazekii (strain Madrid E).